Consider the following 56-residue polypeptide: Large ribosomal subunit protein bL32 (56 aa).

The disordered stretch occupies residues 1–23 (MAVQQNKSTRSKRGMRRSHNALP). Basic residues predominate over residues 9 to 19 (TRSKRGMRRSH).

It belongs to the bacterial ribosomal protein bL32 family.

The polypeptide is Large ribosomal subunit protein bL32 (Blochmanniella floridana).